A 501-amino-acid polypeptide reads, in one-letter code: Phenylalanine--tRNA ligase alpha subunit (501 aa).

L-phenylalanine contacts are provided by Thr340 and Phe423. Residue Glu425 participates in Mg(2+) binding. An L-phenylalanine-binding site is contributed by Phe448.

Belongs to the class-II aminoacyl-tRNA synthetase family. Phe-tRNA synthetase alpha subunit type 2 subfamily. Tetramer of two alpha and two beta subunits. Mg(2+) is required as a cofactor.

The protein resides in the cytoplasm. The enzyme catalyses tRNA(Phe) + L-phenylalanine + ATP = L-phenylalanyl-tRNA(Phe) + AMP + diphosphate + H(+). The chain is Phenylalanine--tRNA ligase alpha subunit from Methanococcus maripaludis (strain C7 / ATCC BAA-1331).